Reading from the N-terminus, the 371-residue chain is Proton-coupled zinc antiporter SLC30A2 (371 aa).

Topologically, residues 1 to 69 (MQTMDKQNLL…DPEKQRARRK (69 aa)) are cytoplasmic. The Mitochondrial localization signal signature appears at 47-50 (HYCH). Cysteine 49 serves as a coordination point for Zn(2+). A helical transmembrane segment spans residues 70–90 (LYVASAICLVFMIGEIIGGYL). The Lumenal portion of the chain corresponds to 91 to 99 (AQSLAIMTD). Residues 100 to 120 (AAHLLTDFASMLISLFALWVS) traverse the membrane as a helical segment. Residues histidine 102 and aspartate 106 each coordinate Zn(2+). Residues 121–136 (SRPATKTMNFGWHRAE) are Cytoplasmic-facing. The helical transmembrane segment at 137–157 (ILGALLSVLSIWVVTGVLVYL) threads the bilayer. At 158 to 172 (AVQRLISGDYEIKGD) the chain is on the lumenal side. Residues 173–193 (TMLITSGCAVAVNLIMGLALH) traverse the membrane as a helical segment. The Cytoplasmic segment spans residues 194–219 (QSGHGHSHGNSRDDSSQQQNPSVRAA). A helical membrane pass occupies residues 220–240 (FIHVIGDLLQSVGVLVAAYII). Positions 222 and 226 each coordinate Zn(2+). Topologically, residues 241–248 (YFKPEYKY) are lumenal. A helical membrane pass occupies residues 249–269 (VDPICTFLFSILVLGTTLTIL). At 270 to 303 (RDVILVLMEGTPKGVDFTTVKNLLLSVDGVEALH) the chain is on the cytoplasmic side. The short motif at 293-294 (LL) is the Lysosomal targeting motif element. Serine 295 carries the post-translational modification Phosphoserine. Zn(2+)-binding residues include histidine 303, histidine 320, and glutamate 354. Residues 304–324 (SLHIWALTVAQPVLSVHIAIA) traverse the membrane as a helical segment. Residues 325–371 (QNADAQAVLKVARDRLQGKFNFHTMTIQIEKYSEDMKNCQACQGPLE) lie on the Lumenal side of the membrane.

This sequence belongs to the cation diffusion facilitator (CDF) transporter (TC 2.A.4) family. SLC30A subfamily. As to quaternary structure, homodimer. Interacts (via lysosomal targeting motif) with AP3D1; in AP-3-mediated transport to lysosomes. Interacts with TMEM163. Phosphorylated at Ser-295. Phosphorylation at Ser-295 prevents localization to lysosomes. Dephosphorylation of Ser-295 which triggers localization to lysosomes, accumulation of zinc into lysosomes and lysosomal-mediated cell death is induced by TNF-alpha.

The protein resides in the cytoplasmic vesicle. The protein localises to the secretory vesicle membrane. It is found in the zymogen granule membrane. Its subcellular location is the endosome membrane. It localises to the lysosome membrane. The protein resides in the mitochondrion inner membrane. The protein localises to the cell membrane. The enzyme catalyses Zn(2+)(in) + 2 H(+)(out) = Zn(2+)(out) + 2 H(+)(in). Functionally, electroneutral proton-coupled antiporter concentrating zinc ions into a variety of intracellular organelles including endosomes, zymogen granules and mitochondria. Thereby, plays a crucial role in cellular zinc homeostasis to confer upon cells protection against its potential cytotoxicity. Regulates the zinc concentration of milk, through the transport of zinc ions into secretory vesicles of mammary cells. By concentrating zinc ions into lysosomes participates to lysosomal-mediated cell death during early mammary gland involution. Its function is as follows. Electroneutral proton-coupled antiporter mediating the efflux of zinc ions through the plasma membrane. The chain is Proton-coupled zinc antiporter SLC30A2 from Mus musculus (Mouse).